Reading from the N-terminus, the 462-residue chain is Tissue alpha-L-fucosidase (462 aa).

An N-terminal signal peptide occupies residues 1-28 (MWDLKSEWWAVGFGLLLLLAASAQAGGL). Residues asparagine 237, asparagine 264, and asparagine 378 are each glycosylated (N-linked (GlcNAc...) asparagine).

It belongs to the glycosyl hydrolase 29 family. In terms of assembly, homotetramer.

It localises to the lysosome. It catalyses the reaction an alpha-L-fucoside + H2O = L-fucose + an alcohol. It carries out the reaction a neolactoside IV(2)-alpha-Fuc-nLc4Cer(d18:1(4E)) + H2O = a neolactoside nLc4Cer(d18:1(4E)) + L-fucose. The catalysed reaction is a neolactoside IV(2)-alpha-Fuc-nLc4Cer(d18:0) + H2O = a neolactoside nLc4Cer(d18:0) + L-fucose. In terms of biological role, alpha-L-fucosidase is responsible for hydrolyzing the alpha-1,6-linked fucose joined to the reducing-end N-acetylglucosamine of the carbohydrate moieties of glycoproteins. The chain is Tissue alpha-L-fucosidase (Fuca1) from Rattus norvegicus (Rat).